Reading from the N-terminus, the 43-residue chain is Protein PsbN (43 aa).

Residues 7 to 27 (LSIGIAVVVIAVTGFSIYTAF) traverse the membrane as a helical segment.

This sequence belongs to the PsbN family.

Its subcellular location is the cellular thylakoid membrane. In terms of biological role, may play a role in photosystem I and II biogenesis. The sequence is that of Protein PsbN from Picosynechococcus sp. (strain ATCC 27264 / PCC 7002 / PR-6) (Agmenellum quadruplicatum).